Reading from the N-terminus, the 385-residue chain is GPN-loop GTPase 1 (385 aa).

Gly13 to Thr18 is a GTP binding site. A Gly-Pro-Asn (GPN)-loop; involved in dimer interface motif is present at residues Gly70 to Asn72. Asn173–Asp176 is a binding site for GTP. Ser304, Ser308, and Ser313 each carry phosphoserine. The segment covering Glu317–Val332 has biased composition (acidic residues). Positions Glu317–Leu356 are disordered. The segment covering Glu333–Val348 has biased composition (basic and acidic residues). The residue at position 352 (Ser352) is a Phosphoserine. Lys369 participates in a covalent cross-link: Glycyl lysine isopeptide (Lys-Gly) (interchain with G-Cter in ubiquitin).

The protein belongs to the GPN-loop GTPase family. In terms of assembly, heterodimers with GPN2 or GPN3. Binds to RNA polymerase II (RNAPII) in a GTP-dependent manner. Interacts with nuclear pore protein NUP133 and nuclear export factor CRM1. Interacts with PCL1. Post-translationally, phosphorylated by the cyclin-CDK PCL1-PHO85.

It localises to the cytoplasm. Its function is as follows. Small GTPase required for proper nuclear import of RNA polymerase II (RNAPII). May act at an RNAP assembly step prior to nuclear import. Promotes sister chromatid separation during anaphase. The polypeptide is GPN-loop GTPase 1 (Saccharomyces cerevisiae (strain ATCC 204508 / S288c) (Baker's yeast)).